A 439-amino-acid chain; its full sequence is Hemagglutinin-esterase (439 aa).

An N-terminal signal peptide occupies residues Met1–Val22. The segment at Thr12–Ala132 is esterase domain 1. The Virion surface portion of the chain corresponds to Phe23–Val407. Ser45 serves as the catalytic Nucleophile. Cysteines 49 and 70 form a disulfide. Residue Asn94 is glycosylated (N-linked (GlcNAc...) asparagine; by host). A disulfide bond links Cys118 and Cys167. A receptor binding region spans residues Arg133–Tyr281. Asn196, Asn246, Asn309, and Asn316 each carry an N-linked (GlcNAc...) asparagine; by host glycan. Intrachain disulfides connect Cys202–Cys291 and Cys210–Cys264. The segment at Leu282–Tyr395 is esterase domain 2. Cys322 and Cys327 are oxidised to a cystine. The N-linked (GlcNAc...) asparagine; by host glycan is linked to Asn331. Active-site charge relay system residues include Asp342 and His345. N-linked (GlcNAc...) asparagine; by host glycosylation is found at Asn360 and Asn374. Cys363 and Cys387 are joined by a disulfide. The helical transmembrane segment at Ile408–Phe428 threads the bilayer. Residues Met429–Ala439 are Intravirion-facing.

Belongs to the influenza type C/coronaviruses hemagglutinin-esterase family. As to quaternary structure, homodimer; disulfide-linked. Forms a complex with the M protein in the pre-Golgi. Associates then with S-M complex to form a ternary complex S-M-HE. In terms of processing, N-glycosylated in the host RER.

It localises to the virion membrane. It is found in the host cell membrane. The enzyme catalyses N-acetyl-9-O-acetylneuraminate + H2O = N-acetylneuraminate + acetate + H(+). It carries out the reaction N-acetyl-4-O-acetylneuraminate + H2O = N-acetylneuraminate + acetate + H(+). Functionally, structural protein that makes short spikes at the surface of the virus. Contains receptor binding and receptor-destroying activities. Mediates de-O-acetylation of N-acetyl-4-O-acetylneuraminic acid, which is probably the receptor determinant recognized by the virus on the surface of erythrocytes and susceptible cells. This receptor-destroying activity is important for virus release as it probably helps preventing self-aggregation and ensures the efficient spread of the progeny virus from cell to cell. May serve as a secondary viral attachment protein for initiating infection, the spike protein being the major one. May become a target for both the humoral and the cellular branches of the immune system. This is Hemagglutinin-esterase from Rat coronavirus (strain 681) (RCV-SDAV).